The sequence spans 301 residues: Homoserine O-acetyltransferase (301 aa).

C142 functions as the Acyl-thioester intermediate in the catalytic mechanism. Substrate contacts are provided by K163 and S192. The active-site Proton acceptor is the H235. E237 is an active-site residue. Position 249 (R249) interacts with substrate.

This sequence belongs to the MetA family.

The protein localises to the cytoplasm. The enzyme catalyses L-homoserine + acetyl-CoA = O-acetyl-L-homoserine + CoA. It participates in amino-acid biosynthesis; L-methionine biosynthesis via de novo pathway; O-acetyl-L-homoserine from L-homoserine: step 1/1. Transfers an acetyl group from acetyl-CoA to L-homoserine, forming acetyl-L-homoserine. The sequence is that of Homoserine O-acetyltransferase from Bacillus cereus (strain B4264).